Here is a 202-residue protein sequence, read N- to C-terminus: ATP synthase subunit b 1 (202 aa).

The helical transmembrane segment at 17–37 (IAAVLCFSVLVPLVAMAAEGG) threads the bilayer.

This sequence belongs to the ATPase B chain family. F-type ATPases have 2 components, F(1) - the catalytic core - and F(0) - the membrane proton channel. F(1) has five subunits: alpha(3), beta(3), gamma(1), delta(1), epsilon(1). F(0) has three main subunits: a(1), b(2) and c(10-14). The alpha and beta chains form an alternating ring which encloses part of the gamma chain. F(1) is attached to F(0) by a central stalk formed by the gamma and epsilon chains, while a peripheral stalk is formed by the delta and b chains.

The protein resides in the cell inner membrane. Functionally, f(1)F(0) ATP synthase produces ATP from ADP in the presence of a proton or sodium gradient. F-type ATPases consist of two structural domains, F(1) containing the extramembraneous catalytic core and F(0) containing the membrane proton channel, linked together by a central stalk and a peripheral stalk. During catalysis, ATP synthesis in the catalytic domain of F(1) is coupled via a rotary mechanism of the central stalk subunits to proton translocation. Its function is as follows. Component of the F(0) channel, it forms part of the peripheral stalk, linking F(1) to F(0). This Syntrophus aciditrophicus (strain SB) protein is ATP synthase subunit b 1.